A 670-amino-acid polypeptide reads, in one-letter code: Acetyl-coenzyme A synthetase (670 aa).

Residues 205–208 and T326 contribute to the CoA site; that span reads RRGK. ATP is bound by residues 402–404, 426–431, D517, R532, and R543; these read GEP and STWWMT. Mg(2+) is bound by residues V554, H556, and V559. R601 contacts CoA. An N6-acetyllysine modification is found at K626.

This sequence belongs to the ATP-dependent AMP-binding enzyme family. Mg(2+) is required as a cofactor. In terms of processing, acetylated. Deacetylation by the SIR2-homolog deacetylase activates the enzyme.

It catalyses the reaction acetate + ATP + CoA = acetyl-CoA + AMP + diphosphate. Its function is as follows. Catalyzes the conversion of acetate into acetyl-CoA (AcCoA), an essential intermediate at the junction of anabolic and catabolic pathways. AcsA undergoes a two-step reaction. In the first half reaction, AcsA combines acetate with ATP to form acetyl-adenylate (AcAMP) intermediate. In the second half reaction, it can then transfer the acetyl group from AcAMP to the sulfhydryl group of CoA, forming the product AcCoA. This chain is Acetyl-coenzyme A synthetase, found in Pyrobaculum arsenaticum (strain DSM 13514 / JCM 11321 / PZ6).